A 344-amino-acid polypeptide reads, in one-letter code: Methionine import ATP-binding protein MetN (344 aa).

Positions 2–241 constitute an ABC transporter domain; it reads IEINQVNKVF…PKTELAHDFI (240 aa). ATP is bound at residue 38-45; that stretch reads GSSGAGKS.

This sequence belongs to the ABC transporter superfamily. Methionine importer (TC 3.A.1.24) family. In terms of assembly, the complex is composed of two ATP-binding proteins (MetN), two transmembrane proteins (MetI) and a solute-binding protein (MetQ).

It localises to the cell inner membrane. It carries out the reaction L-methionine(out) + ATP + H2O = L-methionine(in) + ADP + phosphate + H(+). The enzyme catalyses D-methionine(out) + ATP + H2O = D-methionine(in) + ADP + phosphate + H(+). In terms of biological role, part of the ABC transporter complex MetNIQ involved in methionine import. Responsible for energy coupling to the transport system. This Vibrio vulnificus (strain CMCP6) protein is Methionine import ATP-binding protein MetN.